The primary structure comprises 867 residues: Rifampicin phosphotransferase (867 aa).

Residues 1 to 314 (MKPYVLKFQE…FYIVQSRPIT (314 aa)) are ATP-binding. Residues Lys-22, Arg-117, Gly-132, Thr-136, Gln-183, Glu-297, Gln-309, and Arg-311 each contribute to the ATP site. The segment at 327–754 (NRVYISVAHQ…TSDGEMINGE (428 aa)) is rifampicin-binding. Residues Gln-336 and Tyr-351 each contribute to the rifampicin site. The segment at 767-865 (GLPVSSGTVE…INGTEGYIEI (99 aa)) is swivel phosphohistidine. The active-site Tele-phosphohistidine intermediate is His-825.

Belongs to the rifampicin phosphotransferase family.

The catalysed reaction is rifampicin + ATP + H2O = 21-phosphorifampicin + AMP + phosphate + 2 H(+). In terms of biological role, catalyzes the phosphorylation of rifampicin, also known as rifampin (RIF), leading to its inactivation. Confers high level resistance to a variety of clinically used rifamycin antibiotics. Does not show phosphoenolpyruvate (PEP) synthase activity. In Listeria monocytogenes serotype 4b (strain F2365), this protein is Rifampicin phosphotransferase.